We begin with the raw amino-acid sequence, 826 residues long: Prominin-1-A (826 aa).

The next 3 helical transmembrane spans lie at 50–70 (YYEPGAIGILFNMMHAFLFVV), 106–126 (VVCAALGLLFTVLLPLVGLLF), and 153–173 (LLTTLLLTTTFIITAGVLCAY). Residues Asn-178, Asn-268, Asn-286, Asn-327, Asn-388, and Asn-404 are each glycosylated (N-linked (GlcNAc...) asparagine). 2 consecutive transmembrane segments (helical) span residues 439–459 (CMIVLILTFNFLGLLCGILGF) and 483–503 (VGFSFLFSWVLMGVITALFLA). N-linked (GlcNAc...) asparagine glycosylation is found at Asn-576, Asn-582, Asn-617, and Asn-693.

It belongs to the prominin family.

It is found in the apical cell membrane. Its subcellular location is the cell projection. The protein localises to the microvillus membrane. It localises to the endoplasmic reticulum. The protein resides in the endoplasmic reticulum-Golgi intermediate compartment. Functionally, may play a role in cell differentiation, proliferation and apoptosis. Binds cholesterol in cholesterol-containing plasma membrane microdomains and may play a role in the organization of the apical plasma membrane in epithelial cells. Involved in regulation of MAPK and Akt signaling pathways. In Danio rerio (Zebrafish), this protein is Prominin-1-A (prom1a).